The primary structure comprises 400 residues: Enoyl-[acyl-carrier-protein] reductase [NADH] (400 aa).

NAD(+)-binding positions include 48–53 (GSSSGY), 74–75 (FE), 111–112 (DA), and 139–140 (LA). Position 225 (tyrosine 225) interacts with substrate. Tyrosine 235 functions as the Proton donor in the catalytic mechanism. NAD(+) is bound by residues lysine 244 and 273–275 (VVT).

Belongs to the TER reductase family. As to quaternary structure, monomer.

The enzyme catalyses a 2,3-saturated acyl-[ACP] + NAD(+) = a (2E)-enoyl-[ACP] + NADH + H(+). It participates in lipid metabolism; fatty acid biosynthesis. Functionally, involved in the final reduction of the elongation cycle of fatty acid synthesis (FAS II). Catalyzes the reduction of a carbon-carbon double bond in an enoyl moiety that is covalently linked to an acyl carrier protein (ACP). The sequence is that of Enoyl-[acyl-carrier-protein] reductase [NADH] from Shewanella piezotolerans (strain WP3 / JCM 13877).